The following is a 615-amino-acid chain: Pentatricopeptide repeat-containing protein At2g25580 (615 aa).

The segment at 40–98 is disordered; the sequence is FGNSNDSSEMNPREGYNGRIQNRTGSSGEVSESIHTQSQSLGSNQGRNEQSWKQSPSLS. Residues 58–98 show a composition bias toward polar residues; sequence RIQNRTGSSGEVSESIHTQSQSLGSNQGRNEQSWKQSPSLS. PPR repeat units follow at residues 288–318, 319–353, 354–389, and 390–420; these read DLSSNHVLLEMYSNCGLANEAASVFEKMSEK, NLETWCIIIRCFAKNGFGEDAIDMFSRFKEEGNIP, DGQLFRGIFYACGMLGDVDEGLLHFESMSRDYGIAP, and SIEDYVSLVEMYALPGFLDEALEFVERMPME. The tract at residues 490-520 is type E(+) motif; it reads SSMQEFRAGDTNLPENDELFQLLRNLKMHMV. The tract at residues 521 to 615 is type DYW motif; sequence EVGYVAETRM…NGACTCKDYW (95 aa).

This sequence belongs to the PPR family. PCMP-H subfamily.

The sequence is that of Pentatricopeptide repeat-containing protein At2g25580 (PCMP-H75) from Arabidopsis thaliana (Mouse-ear cress).